Consider the following 645-residue polypeptide: 1,4-alpha-glucan branching enzyme GlgB (645 aa).

Residue Asp309 is the Nucleophile of the active site. The active-site Proton donor is the Glu352. A disordered region spans residues 619 to 645; that stretch reads VKTRKGSKKQDGSKTKVRSNVTSRGKR. The segment covering 636–645 has biased composition (polar residues); that stretch reads RSNVTSRGKR.

Belongs to the glycosyl hydrolase 13 family. GlgB subfamily. In terms of assembly, monomer.

It catalyses the reaction Transfers a segment of a (1-&gt;4)-alpha-D-glucan chain to a primary hydroxy group in a similar glucan chain.. It participates in glycan biosynthesis; glycogen biosynthesis. Its function is as follows. Catalyzes the formation of the alpha-1,6-glucosidic linkages in glycogen by scission of a 1,4-alpha-linked oligosaccharide from growing alpha-1,4-glucan chains and the subsequent attachment of the oligosaccharide to the alpha-1,6 position. The sequence is that of 1,4-alpha-glucan branching enzyme GlgB from Bacillus cereus (strain B4264).